Reading from the N-terminus, the 729-residue chain is Fatty acid oxidation complex subunit alpha (729 aa).

Residues 1–189 (MLYKGDTLYL…KIGLVDGVVK (189 aa)) are enoyl-CoA hydratase/isomerase. D296 provides a ligand contact to substrate. The tract at residues 311-729 (ETPKQAAVLG…ARPVGDLKTA (419 aa)) is 3-hydroxyacyl-CoA dehydrogenase. NAD(+) contacts are provided by residues M324, D343, 400 to 402 (VVE), K407, and S429. Catalysis depends on H450, which acts as the For 3-hydroxyacyl-CoA dehydrogenase activity. N453 lines the NAD(+) pocket. Substrate contacts are provided by N500 and Y660. The tract at residues 708-729 (RHNEPYYPPVEPARPVGDLKTA) is disordered.

In the N-terminal section; belongs to the enoyl-CoA hydratase/isomerase family. It in the C-terminal section; belongs to the 3-hydroxyacyl-CoA dehydrogenase family. Heterotetramer of two alpha chains (FadB) and two beta chains (FadA).

The catalysed reaction is a (3S)-3-hydroxyacyl-CoA + NAD(+) = a 3-oxoacyl-CoA + NADH + H(+). It carries out the reaction a (3S)-3-hydroxyacyl-CoA = a (2E)-enoyl-CoA + H2O. It catalyses the reaction a 4-saturated-(3S)-3-hydroxyacyl-CoA = a (3E)-enoyl-CoA + H2O. The enzyme catalyses (3S)-3-hydroxybutanoyl-CoA = (3R)-3-hydroxybutanoyl-CoA. The catalysed reaction is a (3Z)-enoyl-CoA = a 4-saturated (2E)-enoyl-CoA. It carries out the reaction a (3E)-enoyl-CoA = a 4-saturated (2E)-enoyl-CoA. It functions in the pathway lipid metabolism; fatty acid beta-oxidation. Functionally, involved in the aerobic and anaerobic degradation of long-chain fatty acids via beta-oxidation cycle. Catalyzes the formation of 3-oxoacyl-CoA from enoyl-CoA via L-3-hydroxyacyl-CoA. It can also use D-3-hydroxyacyl-CoA and cis-3-enoyl-CoA as substrate. This is Fatty acid oxidation complex subunit alpha from Escherichia coli O7:K1 (strain IAI39 / ExPEC).